Consider the following 350-residue polypeptide: C5a anaphylatoxin chemotactic receptor 1 (350 aa).

Over 1–37 the chain is Extracellular; sequence MDDMCSILTEEELSLYNITDCEFVKPGGLGPVLGPRH. N17 carries an N-linked (GlcNAc...) asparagine glycan. A helical transmembrane segment spans residues 38 to 64; the sequence is LSALVFYGLVFLLGVPGNALVVWVTGF. Residues 65–69 lie on the Cytoplasmic side of the membrane; sequence RMPRS. Residues 70 to 93 form a helical membrane-spanning segment; it reads VTSLWFLNLALADLLCCLSLPLLM. The Extracellular portion of the chain corresponds to 94 to 110; sequence VPLAMDQHWPFGPVACK. C109 and C187 form a disulfide bridge. The chain crosses the membrane as a helical span at residues 111-132; sequence LLKGLLYLIMFCSVLLLVLISL. Residues 133 to 154 are Cytoplasmic-facing; that stretch reads DRFLLVSWPVWCQNWRRPRKAG. The chain crosses the membrane as a helical span at residues 155-174; sequence WVCVGVWLLALLGSIPQFVY. The Extracellular portion of the chain corresponds to 175 to 197; that stretch reads VKEVQLSTSKSECLGLYTVASAW. Residues 198-223 form a helical membrane-spanning segment; it reads ANTTARFLVGFVLPFITIVTCHWVVY. The Cytoplasmic segment spans residues 224–247; sequence SRARRGSGVGPGRVSEARSRRTLR. A helical transmembrane segment spans residues 248 to 270; sequence VIVAVSLSFFLCWFPLHILDFLV. Topologically, residues 271–287 are extracellular; that stretch reads LSTPRHSSHSANIQLAH. Residues 288-308 traverse the membrane as a helical segment; it reads TLALCLAYCNSCLNPLLYVCL. Over 309–350 the chain is Cytoplasmic; the sequence is GRGFKQNINRSLRNMFNFATEESVTRQSMFKSTSERTQEMNM.

Belongs to the G-protein coupled receptor 1 family. High expression in head, kidney and posterior kidney, lower levels in peripheral blood leukocytes and spleen, low expression in brain and gills, heart, intestine and very low expression in liver and muscle.

It localises to the cell membrane. Its function is as follows. Receptor for the chemotactic and inflammatory peptide anaphylatoxin C5a. This receptor stimulates chemotaxis, granule enzyme release and superoxide anion production. The sequence is that of C5a anaphylatoxin chemotactic receptor 1 (c5ar1) from Oncorhynchus mykiss (Rainbow trout).